We begin with the raw amino-acid sequence, 91 residues long: Heat shock protein 30E (91 aa).

The tract at residues 62-91 (RDQIRQPGAPESEGTSPNTGKDGKDPGNSL) is disordered. The segment covering 82-91 (KDGKDPGNSL) has biased composition (basic and acidic residues).

This sequence belongs to the small heat shock protein (HSP20) family.

In Xenopus laevis (African clawed frog), this protein is Heat shock protein 30E (hsp30e).